Reading from the N-terminus, the 282-residue chain is ATP phosphoribosyltransferase (282 aa).

It belongs to the ATP phosphoribosyltransferase family. Long subfamily. The cofactor is Mg(2+).

Its subcellular location is the cytoplasm. It carries out the reaction 1-(5-phospho-beta-D-ribosyl)-ATP + diphosphate = 5-phospho-alpha-D-ribose 1-diphosphate + ATP. It functions in the pathway amino-acid biosynthesis; L-histidine biosynthesis; L-histidine from 5-phospho-alpha-D-ribose 1-diphosphate: step 1/9. Its activity is regulated as follows. Feedback inhibited by histidine. In terms of biological role, catalyzes the condensation of ATP and 5-phosphoribose 1-diphosphate to form N'-(5'-phosphoribosyl)-ATP (PR-ATP). Has a crucial role in the pathway because the rate of histidine biosynthesis seems to be controlled primarily by regulation of HisG enzymatic activity. The polypeptide is ATP phosphoribosyltransferase (Halobacterium salinarum (strain ATCC 29341 / DSM 671 / R1)).